The chain runs to 193 residues: Peptidyl-tRNA hydrolase (193 aa).

TRNA is bound at residue Tyr16. His21 acts as the Proton acceptor in catalysis. Residues Phe66, Asn68, and Asn114 each contribute to the tRNA site.

Belongs to the PTH family. Monomer.

Its subcellular location is the cytoplasm. The catalysed reaction is an N-acyl-L-alpha-aminoacyl-tRNA + H2O = an N-acyl-L-amino acid + a tRNA + H(+). In terms of biological role, hydrolyzes ribosome-free peptidyl-tRNAs (with 1 or more amino acids incorporated), which drop off the ribosome during protein synthesis, or as a result of ribosome stalling. Functionally, catalyzes the release of premature peptidyl moieties from peptidyl-tRNA molecules trapped in stalled 50S ribosomal subunits, and thus maintains levels of free tRNAs and 50S ribosomes. The chain is Peptidyl-tRNA hydrolase from Pelobacter propionicus (strain DSM 2379 / NBRC 103807 / OttBd1).